Here is a 125-residue protein sequence, read N- to C-terminus: Ribonuclease pancreatic (125 aa).

Lys-7 and Arg-10 together coordinate substrate. His-12 (proton acceptor) is an active-site residue. 4 disulfide bridges follow: Cys-27/Cys-85, Cys-41/Cys-96, Cys-59/Cys-111, and Cys-66/Cys-73. Residue Asn-35 is glycosylated (N-linked (GlcNAc...) asparagine). Substrate is bound by residues 42–46 (KPVNT), Lys-67, and Arg-86. Residue His-120 is the Proton donor of the active site.

Belongs to the pancreatic ribonuclease family. Monomer. Interacts with and forms tight 1:1 complexes with RNH1. Dimerization of two such complexes may occur. Interaction with RNH1 inhibits this protein. In terms of tissue distribution, pancreas.

It is found in the secreted. It carries out the reaction an [RNA] containing cytidine + H2O = an [RNA]-3'-cytidine-3'-phosphate + a 5'-hydroxy-ribonucleotide-3'-[RNA].. The enzyme catalyses an [RNA] containing uridine + H2O = an [RNA]-3'-uridine-3'-phosphate + a 5'-hydroxy-ribonucleotide-3'-[RNA].. Its function is as follows. Endonuclease that catalyzes the cleavage of RNA on the 3' side of pyrimidine nucleotides. Acts on single-stranded and double-stranded RNA. The protein is Ribonuclease pancreatic (RNASE1) of Spalax ehrenbergi (Middle East blind mole rat).